A 533-amino-acid polypeptide reads, in one-letter code: MVLVLYETAAGFALFKVKDEGKMANVEDLCKEFDTPDSARKMVKLKAFEKFDNTSEALEAVAKLLEGAPSKGLRKFLKANCQGETLAVADSKLGNVIKEKLKIDCIHNNAVMELLRGVRSQFTELISGLGDQDLAPMSLGLSHSLARYKLKFSSDKVDTMIIQAIGLLDDLDKELNTYAMRVREWYGWHFPELAKIISDNILYAKSVKLMGNRVNAAKLDFSEILADEIEADLKDAAVISMGTEVSDLDLLHIRELCDQVLSLSEYRAQLYDYLKSRMNTIAPNLTALVGELVGARLISHGGSLLNLSKQPGSTVQILGAEKALFRALKTKHATPKYGLIFHASLVGQAAPKHKGKISRSLAAKTVLAIRVDALGDSQDNTMGLENRAKLEARLRNLEGKDLGRLSGSSKGKPKIEVYNKDKKMGSGGLITPAKTYNTAADSLLGETSAKSEEPSKKKDKKKKKKVEEEKPEEEEPSEKKKKKKAEAETEAVVEVAKEEKKKNKKKRKHEEEETTETPAKKKDKKEKKKKSKD.

The Nop domain maps to 281–399; that stretch reads IAPNLTALVG…LEARLRNLEG (119 aa). Disordered stretches follow at residues 401–433 and 445–533; these read DLGR…ITPA and GETS…KSKD. Residues 413 to 424 show a composition bias toward basic and acidic residues; the sequence is PKIEVYNKDKKM. Over residues 521-533 the composition is skewed to basic residues; it reads KKDKKEKKKKSKD.

The protein belongs to the NOP5/NOP56 family.

It localises to the nucleus. It is found in the nucleolus. Its function is as follows. Required for 60S ribosomal subunit biogenesis. In Arabidopsis thaliana (Mouse-ear cress), this protein is Probable nucleolar protein 5-2 (NOP5-2).